The primary structure comprises 1153 residues: Integrin alpha-M (1153 aa).

The N-terminal stretch at Met1 to Gly16 is a signal peptide. At Phe17–Asn1105 the chain is on the extracellular side. FG-GAP repeat units lie at residues Asn18–Pro75 and Ile76–Gln135. A glycan (N-linked (GlcNAc...) asparagine) is linked at Asn58. Cys66 and Cys73 are disulfide-bonded. Asn86 is a glycosylation site (N-linked (GlcNAc...) asparagine). The cysteines at positions 105 and 123 are disulfide-linked. The 175-residue stretch at Ile164 to Thr338 folds into the VWFA domain. 5 FG-GAP repeats span residues Gln339–Ile390, Asn391–Trp442, Glu443–Trp503, Glu506–Ser564, and His569–Lys629. N-linked (GlcNAc...) asparagine glycosylation is present at Asn391. Ca(2+)-binding residues include Asp465, Asp467, Asp469, Asn471, Asn473, Asp529, Asn531, Asp533, Asp537, Asp592, Asp596, and Asp600. Cys654 and Cys711 form a disulfide bridge. Residues Asn696, Asn734, Asn772, Asn801, Asn881, Asn907, Asn941, Asn980, Asn994, and Asn1022 are each glycosylated (N-linked (GlcNAc...) asparagine). A disulfide bridge connects residues Cys770 and Cys776. 2 disulfides stabilise this stretch: Cys999–Cys1023 and Cys1028–Cys1033. Residues Asn1045, Asn1051, and Asn1076 are each glycosylated (N-linked (GlcNAc...) asparagine). A helical membrane pass occupies residues Pro1106 to Tyr1129. Over Lys1130–Gln1153 the chain is Cytoplasmic. A GFFKR motif motif is present at residues Gly1132–Arg1136.

Belongs to the integrin alpha chain family. As to quaternary structure, heterodimer of an alpha and a beta subunit. ITGAM associates with ITGB2. Found in a complex with CD177 and ITGB2/CD18. Interacts with JAM3. Interacts with THBD. Interacts with complement factor H/CFH; this interaction mediates adhesion of neutrophils to pathogens leading to pathogen clearance. Interacts with TMEM268; this interaction inhibits ITGAM degradation via the endosome-lysosome pathway. Predominantly expressed in monocytes and granulocytes. Expressed in a subset of peritoneal mast cells. Expressed in microglia (at protein level).

Its subcellular location is the cell membrane. It localises to the membrane raft. Functionally, integrin ITGAM/ITGB2 is implicated in various adhesive interactions of monocytes, macrophages and granulocytes as well as in mediating the uptake of complement-coated particles and pathogens. It is identical with CR-3, the receptor for the iC3b fragment of the third complement component. It probably recognizes the R-G-D peptide in C3b. Integrin ITGAM/ITGB2 is also a receptor for fibrinogen, factor X and ICAM1. It recognizes P1 and P2 peptides of fibrinogen gamma chain. Regulates neutrophil migration. In association with beta subunit ITGB2/CD18, required for CD177-PRTN3-mediated activation of TNF primed neutrophils. May regulate phagocytosis-induced apoptosis in extravasated neutrophils. May play a role in mast cell development. Required with TYROBP/DAP12 in microglia to control production of microglial superoxide ions which promote the neuronal apoptosis that occurs during brain development. The chain is Integrin alpha-M (Itgam) from Mus musculus (Mouse).